Consider the following 196-residue polypeptide: ATP-dependent Clp protease proteolytic subunit (196 aa).

S96 functions as the Nucleophile in the catalytic mechanism. The active site involves H121.

This sequence belongs to the peptidase S14 family. As to quaternary structure, fourteen ClpP subunits assemble into 2 heptameric rings which stack back to back to give a disk-like structure with a central cavity, resembling the structure of eukaryotic proteasomes.

The protein resides in the cytoplasm. The catalysed reaction is Hydrolysis of proteins to small peptides in the presence of ATP and magnesium. alpha-casein is the usual test substrate. In the absence of ATP, only oligopeptides shorter than five residues are hydrolyzed (such as succinyl-Leu-Tyr-|-NHMec, and Leu-Tyr-Leu-|-Tyr-Trp, in which cleavage of the -Tyr-|-Leu- and -Tyr-|-Trp bonds also occurs).. Its function is as follows. Cleaves peptides in various proteins in a process that requires ATP hydrolysis. Has a chymotrypsin-like activity. Plays a major role in the degradation of misfolded proteins. This Streptococcus equi subsp. zooepidemicus (strain H70) protein is ATP-dependent Clp protease proteolytic subunit.